Consider the following 564-residue polypeptide: Probable pectinesterase/pectinesterase inhibitor 46 (564 aa).

Residues 25 to 45 (IAIIAISSIVLVCIVVGAVVG) traverse the membrane as a helical segment. The pectinesterase inhibitor 46 stretch occupies residues 62–207 (EPISVSVKAL…TEMTSNALAI (146 aa)). N-linked (GlcNAc...) asparagine glycans are attached at residues N90, N126, N147, and N196. Residues 257–550 (TIVVAKDGSG…FTVKPFIDGN (294 aa)) form a pectinesterase 46 region. Substrate is bound by residues T332 and Q362. The active-site Proton donor; for pectinesterase activity is the D385. A disulfide bridge links C399 with C419. The active-site Nucleophile; for pectinesterase activity is D406. N-linked (GlcNAc...) asparagine glycans are attached at residues N452 and N460. Substrate contacts are provided by R470 and W472.

It in the N-terminal section; belongs to the PMEI family. This sequence in the C-terminal section; belongs to the pectinesterase family.

The protein localises to the membrane. The enzyme catalyses [(1-&gt;4)-alpha-D-galacturonosyl methyl ester](n) + n H2O = [(1-&gt;4)-alpha-D-galacturonosyl](n) + n methanol + n H(+). Its pathway is glycan metabolism; pectin degradation; 2-dehydro-3-deoxy-D-gluconate from pectin: step 1/5. Its function is as follows. Acts in the modification of cell walls via demethylesterification of cell wall pectin. The polypeptide is Probable pectinesterase/pectinesterase inhibitor 46 (PME46) (Arabidopsis thaliana (Mouse-ear cress)).